Consider the following 666-residue polypeptide: tRNA 5-methylaminomethyl-2-thiouridine biosynthesis bifunctional protein MnmC (666 aa).

The segment at 1 to 245 (MKQYAIQPAT…KREMLCGVME (245 aa)) is tRNA (mnm(5)s(2)U34)-methyltransferase. Residues 270–666 (IGGGIASALL…RKLLKGKAVK (397 aa)) are FAD-dependent cmnm(5)s(2)U34 oxidoreductase.

In the N-terminal section; belongs to the methyltransferase superfamily. tRNA (mnm(5)s(2)U34)-methyltransferase family. This sequence in the C-terminal section; belongs to the DAO family. FAD is required as a cofactor.

Its subcellular location is the cytoplasm. The enzyme catalyses 5-aminomethyl-2-thiouridine(34) in tRNA + S-adenosyl-L-methionine = 5-methylaminomethyl-2-thiouridine(34) in tRNA + S-adenosyl-L-homocysteine + H(+). Its function is as follows. Catalyzes the last two steps in the biosynthesis of 5-methylaminomethyl-2-thiouridine (mnm(5)s(2)U) at the wobble position (U34) in tRNA. Catalyzes the FAD-dependent demodification of cmnm(5)s(2)U34 to nm(5)s(2)U34, followed by the transfer of a methyl group from S-adenosyl-L-methionine to nm(5)s(2)U34, to form mnm(5)s(2)U34. This chain is tRNA 5-methylaminomethyl-2-thiouridine biosynthesis bifunctional protein MnmC, found in Salmonella paratyphi B (strain ATCC BAA-1250 / SPB7).